The chain runs to 941 residues: Bifunctional glutamine synthetase adenylyltransferase/adenylyl-removing enzyme (941 aa).

Positions 1 to 431 (MSSAPPFAAA…TFRNAFRLAG (431 aa)) are adenylyl removase. The interval 447–941 (NGHGMRPHAG…DGTIAQAEVK (495 aa)) is adenylyl transferase.

The protein belongs to the GlnE family. Mg(2+) is required as a cofactor.

It catalyses the reaction [glutamine synthetase]-O(4)-(5'-adenylyl)-L-tyrosine + phosphate = [glutamine synthetase]-L-tyrosine + ADP. The catalysed reaction is [glutamine synthetase]-L-tyrosine + ATP = [glutamine synthetase]-O(4)-(5'-adenylyl)-L-tyrosine + diphosphate. In terms of biological role, involved in the regulation of glutamine synthetase GlnA, a key enzyme in the process to assimilate ammonia. When cellular nitrogen levels are high, the C-terminal adenylyl transferase (AT) inactivates GlnA by covalent transfer of an adenylyl group from ATP to specific tyrosine residue of GlnA, thus reducing its activity. Conversely, when nitrogen levels are low, the N-terminal adenylyl removase (AR) activates GlnA by removing the adenylyl group by phosphorolysis, increasing its activity. The regulatory region of GlnE binds the signal transduction protein PII (GlnB) which indicates the nitrogen status of the cell. The polypeptide is Bifunctional glutamine synthetase adenylyltransferase/adenylyl-removing enzyme (Bordetella bronchiseptica (strain ATCC BAA-588 / NCTC 13252 / RB50) (Alcaligenes bronchisepticus)).